A 275-amino-acid polypeptide reads, in one-letter code: NAD kinase (275 aa).

Residue aspartate 66 is the Proton acceptor of the active site. NAD(+)-binding positions include 66–67 (DG), 138–139 (NE), histidine 168, aspartate 170, 181–186 (TAYNLS), and valine 205.

It belongs to the NAD kinase family. Requires a divalent metal cation as cofactor.

It is found in the cytoplasm. The enzyme catalyses NAD(+) + ATP = ADP + NADP(+) + H(+). Involved in the regulation of the intracellular balance of NAD and NADP, and is a key enzyme in the biosynthesis of NADP. Catalyzes specifically the phosphorylation on 2'-hydroxyl of the adenosine moiety of NAD to yield NADP. In Halorubrum lacusprofundi (strain ATCC 49239 / DSM 5036 / JCM 8891 / ACAM 34), this protein is NAD kinase.